The sequence spans 397 residues: 3-hydroxy-3-methylglutaryl-coenzyme A reductase (397 aa).

Active-site charge relay system residues include glutamate 96 and aspartate 301. Histidine 391 acts as the Proton donor in catalysis.

Belongs to the HMG-CoA reductase family.

It carries out the reaction (R)-mevalonate + 2 NADP(+) + CoA = (3S)-3-hydroxy-3-methylglutaryl-CoA + 2 NADPH + 2 H(+). Its pathway is metabolic intermediate biosynthesis; (R)-mevalonate biosynthesis; (R)-mevalonate from acetyl-CoA: step 3/3. In terms of biological role, converts HMG-CoA to mevalonate. The polypeptide is 3-hydroxy-3-methylglutaryl-coenzyme A reductase (hmgA) (Methanothermobacter thermautotrophicus (strain ATCC 29096 / DSM 1053 / JCM 10044 / NBRC 100330 / Delta H) (Methanobacterium thermoautotrophicum)).